The chain runs to 209 residues: Thiamine-phosphate synthase (209 aa).

Residues 36–40 and asparagine 68 contribute to the 4-amino-2-methyl-5-(diphosphooxymethyl)pyrimidine site; that span reads QYRDK. Residues aspartate 69 and aspartate 87 each coordinate Mg(2+). Position 106 (threonine 106) interacts with 4-amino-2-methyl-5-(diphosphooxymethyl)pyrimidine. 133-135 is a 2-[(2R,5Z)-2-carboxy-4-methylthiazol-5(2H)-ylidene]ethyl phosphate binding site; it reads SST. A 4-amino-2-methyl-5-(diphosphooxymethyl)pyrimidine-binding site is contributed by lysine 136. Glycine 163 contributes to the 2-[(2R,5Z)-2-carboxy-4-methylthiazol-5(2H)-ylidene]ethyl phosphate binding site.

It belongs to the thiamine-phosphate synthase family. It depends on Mg(2+) as a cofactor.

The catalysed reaction is 2-[(2R,5Z)-2-carboxy-4-methylthiazol-5(2H)-ylidene]ethyl phosphate + 4-amino-2-methyl-5-(diphosphooxymethyl)pyrimidine + 2 H(+) = thiamine phosphate + CO2 + diphosphate. The enzyme catalyses 2-(2-carboxy-4-methylthiazol-5-yl)ethyl phosphate + 4-amino-2-methyl-5-(diphosphooxymethyl)pyrimidine + 2 H(+) = thiamine phosphate + CO2 + diphosphate. It catalyses the reaction 4-methyl-5-(2-phosphooxyethyl)-thiazole + 4-amino-2-methyl-5-(diphosphooxymethyl)pyrimidine + H(+) = thiamine phosphate + diphosphate. Its pathway is cofactor biosynthesis; thiamine diphosphate biosynthesis; thiamine phosphate from 4-amino-2-methyl-5-diphosphomethylpyrimidine and 4-methyl-5-(2-phosphoethyl)-thiazole: step 1/1. In terms of biological role, condenses 4-methyl-5-(beta-hydroxyethyl)thiazole monophosphate (THZ-P) and 2-methyl-4-amino-5-hydroxymethyl pyrimidine pyrophosphate (HMP-PP) to form thiamine monophosphate (TMP). In Azotobacter vinelandii (strain DJ / ATCC BAA-1303), this protein is Thiamine-phosphate synthase.